Here is a 218-residue protein sequence, read N- to C-terminus: Molybdenum cofactor guanylyltransferase (218 aa).

GTP is bound by residues 16 to 18 (LAG), Lys28, Asn56, Asp74, and Asp109. Asp109 contacts Mg(2+).

This sequence belongs to the MobA family. In terms of assembly, monomer. Requires Mg(2+) as cofactor.

The protein localises to the cytoplasm. It carries out the reaction Mo-molybdopterin + GTP + H(+) = Mo-molybdopterin guanine dinucleotide + diphosphate. Functionally, transfers a GMP moiety from GTP to Mo-molybdopterin (Mo-MPT) cofactor (Moco or molybdenum cofactor) to form Mo-molybdopterin guanine dinucleotide (Mo-MGD) cofactor. This Rhizobium meliloti (strain 1021) (Ensifer meliloti) protein is Molybdenum cofactor guanylyltransferase.